Consider the following 77-residue polypeptide: UPF0349 protein lin2491 (77 aa).

This sequence belongs to the UPF0349 family.

This Listeria innocua serovar 6a (strain ATCC BAA-680 / CLIP 11262) protein is UPF0349 protein lin2491.